Consider the following 490-residue polypeptide: Angiopoietin-related protein 1 (490 aa).

The signal sequence occupies residues 1 to 22 (MKAFVWTLSVLLFLLGSGHCKG). Residues 79 to 167 (ITRMDLENLK…LNVTTEMLKM (89 aa)) adopt a coiled-coil conformation. N-linked (GlcNAc...) asparagine glycans are attached at residues N159 and N187. The Fibrinogen C-terminal domain maps to 270-490 (FINEGPFKDC…AVQMMIKPID (221 aa)). 2 disulfides stabilise this stretch: C279-C308 and C431-C444.

It localises to the secreted. The polypeptide is Angiopoietin-related protein 1 (Angptl1) (Mus musculus (Mouse)).